The following is a 240-amino-acid chain: Protein unc-119 homolog A (240 aa).

Gly residues predominate over residues 1 to 12; the sequence is MKVKKGGGGTGP. The disordered stretch occupies residues 1-62; sequence MKVKKGGGGT…PLQGKQPIGP (62 aa). Residues S37, S39, and S41 each carry the phosphoserine; by CK2 modification. Y131 is a binding site for tetradecanoate.

It belongs to the PDE6D/unc-119 family. Interacts with CABP4; in the absence of calcium. May interact with GTP-bound ARL1. Interacts with ARL2 and ARL3 (GTP-bound forms); this promotes the release of myristoylated cargo proteins. Found in a complex with ARL3, RP2 and UNC119; RP2 induces hydrolysis of GTP ARL3 in the complex, leading to the release of UNC119. Interacts with NPHP3 (when myristoylated). Interacts with CYS1 (when myristoylated). Interacts with MACIR; interaction only takes place when UNC119 is not liganded with myristoylated proteins. Interacts with ARL1 and ARL3 GTP-bound forms. Interacts with ARL2. Interacts with ARL2. Interacts with LCK; this interaction plays a crucial role in activation of LCK. Interacts with FYN. Interacts with RAB11A; in a cell cycle-dependent manner. Interacts with LYN (via SH2 and SH3 domains); leading to LYN activation. Interacts with DNM1; leading to a decrease of DNM1 GTPase activity. Found in a complex with ABL1, ABL2, CRK and UNC119; leading to the inhibition of CRK phosphorylation by ABL kinases. Interacts with CD44. Interacts with KLHL18 (via kelch repeats). Interacts with PPP3CA, PPP3CB and PPP3CC. Interacts with USP48; this interaction promotes UNC119 stability. In terms of processing, phosphorylation suppresses its interaction with KLHL18 and down-regulates its KLHL18-mediated degradation. Phosphorylated more under light conditions than dark conditions. Dephosphorylated by calcineurin.

It is found in the cytoplasm. The protein localises to the cytoskeleton. It localises to the microtubule organizing center. Its subcellular location is the centrosome. The protein resides in the spindle. It is found in the spindle pole. Functionally, involved in synaptic functions in photoreceptor cells, the signal transduction in immune cells as a Src family kinase activator, endosome recycling, the uptake of bacteria and endocytosis, protein trafficking in sensory neurons and as lipid-binding chaperone with specificity for a diverse subset of myristoylated proteins. Specifically binds the myristoyl moiety of a subset of N-terminally myristoylated proteins and is required for their localization. Binds myristoylated GNAT1 and is required for G-protein localization and trafficking in sensory neurons. Probably plays a role in trafficking proteins in photoreceptor cells. Plays important roles in mediating Src family kinase signals for the completion of cytokinesis via RAB11A. The chain is Protein unc-119 homolog A (Unc119) from Rattus norvegicus (Rat).